The primary structure comprises 145 residues: Thioredoxin C-3 (145 aa).

Heme-binding residues include C25, C28, and H29. Residues 29–140 (HQALLPLEPI…LQQWLDQQLQ (112 aa)) enclose the Thioredoxin domain. C65 and C68 are disulfide-bonded.

Belongs to the thioredoxin family.

Its function is as follows. Participates in various redox reactions through the reversible oxidation of its active center dithiol to a disulfide and catalyzes dithiol-disulfide exchange reactions. The chain is Thioredoxin C-3 from Corynebacterium nephridii.